A 362-amino-acid chain; its full sequence is Protein RecA (362 aa).

Glycine 65–threonine 72 contributes to the ATP binding site. Residues arginine 323 to glutamate 362 are disordered. The segment covering leucine 331–glutamate 362 has biased composition (basic and acidic residues).

The protein belongs to the RecA family.

It localises to the cytoplasm. Can catalyze the hydrolysis of ATP in the presence of single-stranded DNA, the ATP-dependent uptake of single-stranded DNA by duplex DNA, and the ATP-dependent hybridization of homologous single-stranded DNAs. It interacts with LexA causing its activation and leading to its autocatalytic cleavage. This Limosilactobacillus reuteri (strain DSM 20016) (Lactobacillus reuteri) protein is Protein RecA.